The chain runs to 385 residues: Cytochrome b (385 aa).

The next 4 membrane-spanning stretches (helical) occupy residues 32–52 (FGSL…TLAM), 76–98 (WFIR…AHMG), 113–133 (PWSI…MGYV), and 179–199 (FFAL…LHLI). Positions 82 and 96 each coordinate heme b. Residues histidine 183 and histidine 197 each coordinate heme b. A ubiquinone is bound at residue histidine 202. The next 4 membrane-spanning stretches (helical) occupy residues 225–245 (YSFK…LFVF), 289–309 (LGGV…PIVD), 321–341 (ISKL…VLGQ), and 348–368 (FIVL…ILLP).

It belongs to the cytochrome b family. Fungal cytochrome b-c1 complex contains 10 subunits; 3 respiratory subunits, 2 core proteins and 5 low-molecular weight proteins. Cytochrome b-c1 complex is a homodimer. It depends on heme b as a cofactor.

The protein localises to the mitochondrion inner membrane. Component of the ubiquinol-cytochrome c reductase complex (complex III or cytochrome b-c1 complex) that is part of the mitochondrial respiratory chain. The b-c1 complex mediates electron transfer from ubiquinol to cytochrome c. Contributes to the generation of a proton gradient across the mitochondrial membrane that is then used for ATP synthesis. In Yarrowia lipolytica (strain CLIB 122 / E 150) (Yeast), this protein is Cytochrome b (COB).